The sequence spans 95 residues: Protein TusB (95 aa).

This sequence belongs to the DsrH/TusB family. Heterohexamer, formed by a dimer of trimers. The hexameric TusBCD complex contains 2 copies each of TusB, TusC and TusD. The TusBCD complex interacts with TusE.

It is found in the cytoplasm. Its function is as follows. Part of a sulfur-relay system required for 2-thiolation of 5-methylaminomethyl-2-thiouridine (mnm(5)s(2)U) at tRNA wobble positions. This is Protein TusB from Pectobacterium parmentieri.